The chain runs to 484 residues: Proline--tRNA ligase (484 aa).

This sequence belongs to the class-II aminoacyl-tRNA synthetase family. ProS type 3 subfamily. Homodimer.

Its subcellular location is the cytoplasm. The catalysed reaction is tRNA(Pro) + L-proline + ATP = L-prolyl-tRNA(Pro) + AMP + diphosphate. Catalyzes the attachment of proline to tRNA(Pro) in a two-step reaction: proline is first activated by ATP to form Pro-AMP and then transferred to the acceptor end of tRNA(Pro). The chain is Proline--tRNA ligase from Haloarcula marismortui (strain ATCC 43049 / DSM 3752 / JCM 8966 / VKM B-1809) (Halobacterium marismortui).